The primary structure comprises 319 residues: Beta-ketoacyl-[acyl-carrier-protein] synthase III (319 aa).

Residues C113 and H246 contribute to the active site. Residues 247-251 (QANLR) are ACP-binding. Residue N276 is part of the active site.

The protein belongs to the thiolase-like superfamily. FabH family. Homodimer.

It localises to the cytoplasm. It catalyses the reaction malonyl-[ACP] + acetyl-CoA + H(+) = 3-oxobutanoyl-[ACP] + CO2 + CoA. The protein operates within lipid metabolism; fatty acid biosynthesis. In terms of biological role, catalyzes the condensation reaction of fatty acid synthesis by the addition to an acyl acceptor of two carbons from malonyl-ACP. Catalyzes the first condensation reaction which initiates fatty acid synthesis and may therefore play a role in governing the total rate of fatty acid production. Possesses both acetoacetyl-ACP synthase and acetyl transacylase activities. Its substrate specificity determines the biosynthesis of branched-chain and/or straight-chain of fatty acids. This Laribacter hongkongensis (strain HLHK9) protein is Beta-ketoacyl-[acyl-carrier-protein] synthase III.